The following is a 278-amino-acid chain: 2-heptyl-3-hydroxy-4-quinolone dioxygenase AqdC1 (278 aa).

An AB hydrolase-1 domain is found at 29–158 (PTIVMLPGWC…GWVDSCRALF (130 aa)). Position 103 (His103) interacts with substrate. The Proton donor/acceptor role is filled by His250.

The protein belongs to the AB hydrolase superfamily.

The catalysed reaction is 2-heptyl-3-hydroxy-4(1H)-quinolone + O2 = N-octanoylanthranilate + CO + H(+). Its function is as follows. Involved in the degradation of the Pseudomonas aeruginosa quorum sensing signal molecules HHQ (2-heptyl-4-quinolone) and PQS (2-heptyl-3-hydroxy-4-quinolone) to anthranilic acid. Catalyzes the cleavage of PQS to form N-octanoylanthranilic acid and carbon monoxide. This Rhodococcus erythropolis (Arthrobacter picolinophilus) protein is 2-heptyl-3-hydroxy-4-quinolone dioxygenase AqdC1.